The chain runs to 178 residues: Large ribosomal subunit protein uL6 (178 aa).

This sequence belongs to the universal ribosomal protein uL6 family. As to quaternary structure, part of the 50S ribosomal subunit.

This protein binds to the 23S rRNA, and is important in its secondary structure. It is located near the subunit interface in the base of the L7/L12 stalk, and near the tRNA binding site of the peptidyltransferase center. This Arthrobacter sp. (strain FB24) protein is Large ribosomal subunit protein uL6.